The following is a 301-amino-acid chain: Sulfate adenylyltransferase subunit 2 (301 aa).

The segment at 279–301 (RQGRLIDRDEAGSMEKKKREGYF) is disordered.

This sequence belongs to the PAPS reductase family. CysD subfamily. As to quaternary structure, sulfate-activating enzymes, NodP and NodQ, may be physically associated.

It carries out the reaction sulfate + ATP + H(+) = adenosine 5'-phosphosulfate + diphosphate. Its function is as follows. Proposed to provide activated sulfate for transfer to nod factor. The protein is Sulfate adenylyltransferase subunit 2 (nodP) of Rhizobium sp. (strain N33).